Here is a 290-residue protein sequence, read N- to C-terminus: Nucleoid occlusion protein (290 aa).

The segment at residues 153 to 172 is a DNA-binding region (H-T-H motif); that stretch reads EALAQRLGKGQSTVANKLRL.

The protein belongs to the ParB family.

It is found in the cytoplasm. The protein resides in the nucleoid. Functionally, effects nucleoid occlusion by binding relatively nonspecifically to DNA and preventing the assembly of the division machinery in the vicinity of the nucleoid, especially under conditions that disturb the cell cycle. It helps to coordinate cell division and chromosome segregation by preventing the formation of the Z ring through the nucleoid, which would cause chromosome breakage. The sequence is that of Nucleoid occlusion protein from Bacillus mycoides (strain KBAB4) (Bacillus weihenstephanensis).